The primary structure comprises 507 residues: Arabinose import ATP-binding protein AraG (507 aa).

ABC transporter domains lie at 14 to 249 (LRFN…MVGR) and 249 to 505 (RDIQ…LPRT). Residue 46–53 (GENGAGKS) participates in ATP binding.

This sequence belongs to the ABC transporter superfamily. Arabinose importer (TC 3.A.1.2.2) family. As to quaternary structure, the complex is composed of two ATP-binding proteins (AraG), two transmembrane proteins (AraH) and a solute-binding protein (AraF).

The protein localises to the cell inner membrane. The enzyme catalyses L-arabinose(out) + ATP + H2O = L-arabinose(in) + ADP + phosphate + H(+). In terms of biological role, part of the ABC transporter complex AraFGH involved in arabinose import. Responsible for energy coupling to the transport system. The protein is Arabinose import ATP-binding protein AraG of Pseudomonas savastanoi pv. phaseolicola (strain 1448A / Race 6) (Pseudomonas syringae pv. phaseolicola (strain 1448A / Race 6)).